A 954-amino-acid chain; its full sequence is Kinesin-like protein KIN-7A (954 aa).

Positions 1-29 are disordered; that stretch reads MGVSRPPSTPASKIERTPMSTPTPGGSTR. Residues 17–28 show a composition bias toward low complexity; the sequence is TPMSTPTPGGST. In terms of domain architecture, Kinesin motor spans 34–354; sequence KIFVTVRVRP…LFFATCAKEV (321 aa). Residue 119-126 participates in ATP binding; the sequence is GQTSSGKT. Coiled coils occupy residues 363–436 and 480–588; these read VVSD…GDNQ and LKHE…LVMS. 2 disordered regions span residues 624 to 689 and 741 to 762; these read PNLI…SSVN and GKTNDMEEDSEENAGSLQDGPD. The segment covering 630-639 has biased composition (low complexity); it reads PCSPLSSSRP. Composition is skewed to basic and acidic residues over residues 640-660 and 666-681; these read LEPEVENRAPEGDTVSHEGSE and KSEDTGDVSSRDETPR.

This sequence belongs to the TRAFAC class myosin-kinesin ATPase superfamily. Kinesin family. KIN-7 subfamily. Ubiquitous with a preferential expression in the shoot apical meristem (SAM).

In terms of biological role, may be essential to promote the progression of cytokinesis during node-internode differentiation. In Oryza sativa subsp. japonica (Rice), this protein is Kinesin-like protein KIN-7A.